The following is a 409-amino-acid chain: uncharacterized protein (409 aa).

The signal sequence occupies residues 1 to 26 (MKKELLASLVLCLSLSPLVSTNEVFA).

This is an uncharacterized protein from Bacillus subtilis (strain 168).